The primary structure comprises 326 residues: Aspartate--ammonia ligase (326 aa).

Belongs to the class-II aminoacyl-tRNA synthetase family. AsnA subfamily.

The protein resides in the cytoplasm. It carries out the reaction L-aspartate + NH4(+) + ATP = L-asparagine + AMP + diphosphate + H(+). It participates in amino-acid biosynthesis; L-asparagine biosynthesis; L-asparagine from L-aspartate (ammonia route): step 1/1. This is Aspartate--ammonia ligase from Malacoplasma penetrans (strain HF-2) (Mycoplasma penetrans).